Reading from the N-terminus, the 455-residue chain is Argininosuccinate lyase (455 aa).

The protein belongs to the lyase 1 family. Argininosuccinate lyase subfamily.

Its subcellular location is the cytoplasm. The catalysed reaction is 2-(N(omega)-L-arginino)succinate = fumarate + L-arginine. The protein operates within amino-acid biosynthesis; L-arginine biosynthesis; L-arginine from L-ornithine and carbamoyl phosphate: step 3/3. This Roseiflexus castenholzii (strain DSM 13941 / HLO8) protein is Argininosuccinate lyase.